We begin with the raw amino-acid sequence, 968 residues long: A disintegrin and metalloproteinase with thrombospondin motifs 1 (968 aa).

2 disordered regions span residues methionine 1–arginine 23 and alanine 177–arginine 253. An N-terminal signal peptide occupies residues methionine 1–cysteine 48. A propeptide spanning residues alanine 49–arginine 253 is cleaved from the precursor. Positions alanine 204 to aspartate 211 match the Cysteine switch motif. Residue cysteine 206 participates in Zn(2+) binding. Over residues leucine 214 to glutamine 229 the composition is skewed to polar residues. A Peptidase M12B domain is found at arginine 259 to proline 468. Residues glutamate 262, aspartate 345, and aspartate 352 each coordinate Ca(2+). 4 disulfide bridges follow: cysteine 334–cysteine 386, cysteine 363–cysteine 368, cysteine 380–cysteine 463, and cysteine 418–cysteine 447. Histidine 402 lines the Zn(2+) pocket. Glutamate 403 is a catalytic residue. 2 residues coordinate Zn(2+): histidine 406 and histidine 412. Residues cysteine 463 and aspartate 466 each coordinate Ca(2+). The Disintegrin domain occupies aspartate 477–valine 559. 4 disulfide bridges follow: cysteine 489/cysteine 512, cysteine 500/cysteine 522, cysteine 507/cysteine 541, and cysteine 535/cysteine 546. An N-linked (GlcNAc...) asparagine glycan is attached at asparagine 548. One can recognise a TSP type-1 1 domain in the interval histidine 560–proline 615. 3 disulfides stabilise this stretch: cysteine 572/cysteine 609, cysteine 576/cysteine 614, and cysteine 587/cysteine 599. Asparagine 721, asparagine 765, and asparagine 783 each carry an N-linked (GlcNAc...) asparagine glycan. Residues lysine 726–phenylalanine 850 are spacer. TSP type-1 domains follow at residues threonine 855–proline 911 and histidine 912–serine 968. Asparagine 946 carries an N-linked (GlcNAc...) asparagine glycan.

The cofactor is Zn(2+). The precursor is cleaved by a furin endopeptidase. In terms of processing, glycosylated. Can be O-fucosylated by POFUT2 on a serine or a threonine residue found within the consensus sequence C1-X(2)-(S/T)-C2-G of the TSP type-1 repeat domains where C1 and C2 are the first and second cysteine residue of the repeat, respectively. Fucosylated repeats can then be further glycosylated by the addition of a beta-1,3-glucose residue by the glucosyltransferase, B3GALTL. Fucosylation mediates the efficient secretion of ADAMTS family members. Can also be C-glycosylated with one or two mannose molecules on tryptophan residues within the consensus sequence W-X-X-W of the TPRs, and N-glycosylated. These other glycosylations can also facilitate secretion.

The protein localises to the secreted. The protein resides in the extracellular space. It is found in the extracellular matrix. Functionally, metalloprotease which cleaves aggrecan, a cartilage proteoglycan, at the '1691-Glu-|-Leu-1692' site (within the chondroitin sulfate attachment domain), and may be involved in its turnover. Also cleaves COMP. Has angiogenic inhibitor activity. May play a critical role in follicular rupture. In Mus musculus (Mouse), this protein is A disintegrin and metalloproteinase with thrombospondin motifs 1 (Adamts1).